A 274-amino-acid chain; its full sequence is Copper chaperone for superoxide dismutase (274 aa).

An HMA domain is found at leucine 11 to valine 74. The Cu cation site is built by cysteine 22 and cysteine 25. A Glycyl lysine isopeptide (Lys-Gly) (interchain with G-Cter in ubiquitin) cross-link involves residue lysine 76. Residues alanine 88–alanine 234 form a superoxide dismutase-like region. A disulfide bond links cysteine 141 and cysteine 227. Histidine 147, histidine 155, histidine 164, and aspartate 167 together coordinate Zn(2+). Residues lysine 189, lysine 216, and lysine 241 each participate in a glycyl lysine isopeptide (Lys-Gly) (interchain with G-Cter in ubiquitin) cross-link. Cu cation contacts are provided by cysteine 244 and cysteine 246. Serine 267 carries the phosphoserine modification.

It in the C-terminal section; belongs to the Cu-Zn superoxide dismutase family. In terms of assembly, homodimer, and heterodimer with SOD1. Interacts with COMMD1. Interacts with XIAP/BIRC4. Interacts with SLC31A1(via C-terminal domain); this interaction is Cu(1+)-mediated. The heterodimer CCS:SOD1 interacts with SLC31A1; this heterotrimer is Cu(1+)-mediated and its maintenance is regulated through SOD1 activation. The cofactor is Cu(2+). Requires Zn(2+) as cofactor. Post-translationally, ubiquitinion by XIAP/BIRC4 leads to enhancement of its chaperone activity toward its physiologic target, SOD1, rather than proteasomal degradation. XIAP/BIRC4 preferentially ubiquitinates at Lys-241. Ubiquitous.

The protein resides in the cytoplasm. Delivers copper to copper zinc superoxide dismutase (SOD1). This Homo sapiens (Human) protein is Copper chaperone for superoxide dismutase.